A 123-amino-acid chain; its full sequence is Small ribosomal subunit protein bS16 (123 aa).

Positions 86–123 (PVRAEQTKQPQPKAKAQQRAKDQAERDAAAAAEAAAGE) are disordered. The span at 93–102 (KQPQPKAKAQ) shows a compositional bias: low complexity. A compositionally biased stretch (basic and acidic residues) spans 104–113 (RAKDQAERDA). The segment covering 114–123 (AAAAEAAAGE) has biased composition (low complexity).

This sequence belongs to the bacterial ribosomal protein bS16 family.

This Paramagnetospirillum magneticum (strain ATCC 700264 / AMB-1) (Magnetospirillum magneticum) protein is Small ribosomal subunit protein bS16.